Reading from the N-terminus, the 173-residue chain is uncharacterized protein (173 aa).

Residues 1–21 (MFIVFYLILIIFIFIYFHVYI) traverse the membrane as a helical segment.

The protein to T.pallidum TP0711.

It is found in the membrane. This is an uncharacterized protein from Borreliella burgdorferi (strain ATCC 35210 / DSM 4680 / CIP 102532 / B31) (Borrelia burgdorferi).